We begin with the raw amino-acid sequence, 192 residues long: NADH dehydrogenase [ubiquinone] iron-sulfur protein 3 (192 aa).

The protein belongs to the complex I 30 kDa subunit family. As to quaternary structure, complex I is composed of about 45 different subunits. This is a component of the iron-sulfur (IP) fragment of the enzyme.

It is found in the mitochondrion inner membrane. It carries out the reaction a ubiquinone + NADH + 5 H(+)(in) = a ubiquinol + NAD(+) + 4 H(+)(out). Core subunit of the mitochondrial membrane respiratory chain NADH dehydrogenase (Complex I) that is believed to belong to the minimal assembly required for catalysis. Complex I functions in the transfer of electrons from NADH to the respiratory chain. The immediate electron acceptor for the enzyme is believed to be ubiquinone. This chain is NADH dehydrogenase [ubiquinone] iron-sulfur protein 3 (NAD9), found in Beta trigyna (Caucasian wild beet).